Here is a 149-residue protein sequence, read N- to C-terminus: 3-dehydroquinate dehydratase (149 aa).

The active-site Proton acceptor is tyrosine 22. Residues asparagine 73, histidine 79, and aspartate 86 each coordinate substrate. The active-site Proton donor is the histidine 99. Substrate is bound by residues 100–101 and arginine 110; that span reads LS.

It belongs to the type-II 3-dehydroquinase family. As to quaternary structure, homododecamer.

It carries out the reaction 3-dehydroquinate = 3-dehydroshikimate + H2O. Its pathway is metabolic intermediate biosynthesis; chorismate biosynthesis; chorismate from D-erythrose 4-phosphate and phosphoenolpyruvate: step 3/7. Its function is as follows. Catalyzes a trans-dehydration via an enolate intermediate. This Prochlorococcus marinus (strain SARG / CCMP1375 / SS120) protein is 3-dehydroquinate dehydratase.